Here is a 267-residue protein sequence, read N- to C-terminus: Tryptophan synthase alpha chain (267 aa).

Residues Glu43 and Asp54 each act as proton acceptor in the active site.

This sequence belongs to the TrpA family. As to quaternary structure, tetramer of two alpha and two beta chains.

It carries out the reaction (1S,2R)-1-C-(indol-3-yl)glycerol 3-phosphate + L-serine = D-glyceraldehyde 3-phosphate + L-tryptophan + H2O. Its pathway is amino-acid biosynthesis; L-tryptophan biosynthesis; L-tryptophan from chorismate: step 5/5. Its function is as follows. The alpha subunit is responsible for the aldol cleavage of indoleglycerol phosphate to indole and glyceraldehyde 3-phosphate. This chain is Tryptophan synthase alpha chain, found in Bacillus licheniformis (strain ATCC 14580 / DSM 13 / JCM 2505 / CCUG 7422 / NBRC 12200 / NCIMB 9375 / NCTC 10341 / NRRL NRS-1264 / Gibson 46).